The primary structure comprises 210 residues: Ribosomal RNA small subunit methyltransferase G (210 aa).

Residues Gly-76, Leu-81, 127–128 (VE), and Arg-142 contribute to the S-adenosyl-L-methionine site.

This sequence belongs to the methyltransferase superfamily. RNA methyltransferase RsmG family.

It localises to the cytoplasm. The catalysed reaction is guanosine(527) in 16S rRNA + S-adenosyl-L-methionine = N(7)-methylguanosine(527) in 16S rRNA + S-adenosyl-L-homocysteine. Specifically methylates the N7 position of guanine in position 527 of 16S rRNA. This Vibrio atlanticus (strain LGP32) (Vibrio splendidus (strain Mel32)) protein is Ribosomal RNA small subunit methyltransferase G.